A 46-amino-acid chain; its full sequence is Esculentin-1 (46 aa).

Cysteines 40 and 46 form a disulfide.

This sequence belongs to the frog skin active peptide (FSAP) family. Brevinin subfamily. As to expression, expressed by the skin glands.

It localises to the secreted. Its function is as follows. Shows antibacterial activity against representative Gram-negative and Gram-positive bacterial species, and hemolytic activity. The polypeptide is Esculentin-1 (Pelophylax lessonae (Pool frog)).